Here is a 914-residue protein sequence, read N- to C-terminus: Beta-mannosidase A (914 aa).

The N-terminal stretch at 1–20 (MRFTATAAALVASSIPATLG) is a signal peptide. Residues Asn39, Asn79, Asn230, Asn265, Asn299, Asn309, and Asn330 are each glycosylated (N-linked (GlcNAc...) asparagine). Glu462 acts as the Proton donor in catalysis. Asn591, Asn614, Asn641, Asn721, Asn744, Asn773, Asn784, and Asn909 each carry an N-linked (GlcNAc...) asparagine glycan.

The protein belongs to the glycosyl hydrolase 2 family. Beta-mannosidase A subfamily. In terms of assembly, homodimer.

The protein resides in the secreted. It catalyses the reaction Hydrolysis of terminal, non-reducing beta-D-mannose residues in beta-D-mannosides.. It participates in glycan metabolism; N-glycan degradation. In terms of biological role, exoglycosidase that cleaves the single beta-linked mannose residue from the non-reducing end of beta-mannosidic oligosaccharides of various complexity and length. Involved in the degradation of polymeric mannan and galactomannan. This is Beta-mannosidase A (mndA) from Aspergillus flavus (strain ATCC 200026 / FGSC A1120 / IAM 13836 / NRRL 3357 / JCM 12722 / SRRC 167).